The following is a 378-amino-acid chain: Cobalt-precorrin-5B C(1)-methyltransferase (378 aa).

It belongs to the CbiD family.

It catalyses the reaction Co-precorrin-5B + S-adenosyl-L-methionine = Co-precorrin-6A + S-adenosyl-L-homocysteine. It participates in cofactor biosynthesis; adenosylcobalamin biosynthesis; cob(II)yrinate a,c-diamide from sirohydrochlorin (anaerobic route): step 6/10. Its function is as follows. Catalyzes the methylation of C-1 in cobalt-precorrin-5B to form cobalt-precorrin-6A. The protein is Cobalt-precorrin-5B C(1)-methyltransferase of Methanococcus aeolicus (strain ATCC BAA-1280 / DSM 17508 / OCM 812 / Nankai-3).